Here is a 303-residue protein sequence, read N- to C-terminus: MATQTKHDWADDEDLEETTTTTAPTTDLPPPQKIQNKDGTWTIIEYRINDLGQKVKATRRVRYVVRREVVNPRVAERKTWAKFGDSANDPKGPAPDTTTVGENIIFRPSVNWRKEAKDEANDPNAQAMKDKLKDKKVKCRICNGEHFTARCPYKDTMAPIGEAGPADVAAGMGDEPAAAGPAAAGAAGAGKKGSYVPPAMRAGAGGAQGERMGGKYGERDDLATLRVTNVSEMAEEQELRDMFERFGRVTRVFLAKDRDTGMAKGFAFISYADRDDAVKACNKMDGFGFRHLILRVEFAKKAQ.

The interval 1 to 38 (MATQTKHDWADDEDLEETTTTTAPTTDLPPPQKIQNKD) is disordered. Residues 223–301 (ATLRVTNVSE…LILRVEFAKK (79 aa)) form the RRM domain.

This sequence belongs to the eIF-3 subunit G family. Component of the eukaryotic translation initiation factor 3 (eIF-3) complex.

It is found in the cytoplasm. Functionally, RNA-binding component of the eukaryotic translation initiation factor 3 (eIF-3) complex, which is involved in protein synthesis of a specialized repertoire of mRNAs and, together with other initiation factors, stimulates binding of mRNA and methionyl-tRNAi to the 40S ribosome. The eIF-3 complex specifically targets and initiates translation of a subset of mRNAs involved in cell proliferation. This subunit can bind 18S rRNA. This Chaetomium globosum (strain ATCC 6205 / CBS 148.51 / DSM 1962 / NBRC 6347 / NRRL 1970) (Soil fungus) protein is Eukaryotic translation initiation factor 3 subunit G.